A 463-amino-acid polypeptide reads, in one-letter code: ATP-dependent protease ATPase subunit HslU (463 aa).

ATP is bound by residues Ile-19, 61–66 (GVGKTE), Asp-277, Glu-341, and Arg-413.

The protein belongs to the ClpX chaperone family. HslU subfamily. In terms of assembly, a double ring-shaped homohexamer of HslV is capped on each side by a ring-shaped HslU homohexamer. The assembly of the HslU/HslV complex is dependent on binding of ATP.

It is found in the cytoplasm. In terms of biological role, ATPase subunit of a proteasome-like degradation complex; this subunit has chaperone activity. The binding of ATP and its subsequent hydrolysis by HslU are essential for unfolding of protein substrates subsequently hydrolyzed by HslV. HslU recognizes the N-terminal part of its protein substrates and unfolds these before they are guided to HslV for hydrolysis. This is ATP-dependent protease ATPase subunit HslU from Bacillus cereus (strain 03BB102).